The following is a 246-amino-acid chain: UPF0309 protein TTE0306 (246 aa).

An SIS domain is found at 31 to 212 (ITESLISEDS…EAEIITNMLE (182 aa)).

Belongs to the UPF0309 family.

The polypeptide is UPF0309 protein TTE0306 (Caldanaerobacter subterraneus subsp. tengcongensis (strain DSM 15242 / JCM 11007 / NBRC 100824 / MB4) (Thermoanaerobacter tengcongensis)).